The chain runs to 408 residues: Aspartate aminotransferase, cytoplasmic (408 aa).

L-aspartate contacts are provided by glycine 36, tryptophan 133, and asparagine 187. Lysine 251 is modified (N6-(pyridoxal phosphate)lysine). Arginine 379 serves as a coordination point for L-aspartate.

This sequence belongs to the class-I pyridoxal-phosphate-dependent aminotransferase family. Homodimer. Pyridoxal 5'-phosphate serves as cofactor. As to expression, expressed in all somatic tissues including the nervous system.

The protein localises to the cytoplasm. The catalysed reaction is L-aspartate + 2-oxoglutarate = oxaloacetate + L-glutamate. Functionally, biosynthesis of L-glutamate from L-aspartate. Important regulator of levels of glutamate, the major excitatory neurotransmitter of the central nervous system. The polypeptide is Aspartate aminotransferase, cytoplasmic (Caenorhabditis elegans).